The following is a 331-amino-acid chain: Ketol-acid reductoisomerase (NADP(+)) (331 aa).

A KARI N-terminal Rossmann domain is found at A2–T182. NADP(+) is bound by residues Y25–Q28, S51, and D83–Q86. The active site involves H108. G134 contacts NADP(+). The KARI C-terminal knotted domain maps to T183–L329. Mg(2+) is bound by residues D191, E195, E227, and E231. Position 252 (S252) interacts with substrate.

Belongs to the ketol-acid reductoisomerase family. The cofactor is Mg(2+).

It carries out the reaction (2R)-2,3-dihydroxy-3-methylbutanoate + NADP(+) = (2S)-2-acetolactate + NADPH + H(+). The catalysed reaction is (2R,3R)-2,3-dihydroxy-3-methylpentanoate + NADP(+) = (S)-2-ethyl-2-hydroxy-3-oxobutanoate + NADPH + H(+). Its pathway is amino-acid biosynthesis; L-isoleucine biosynthesis; L-isoleucine from 2-oxobutanoate: step 2/4. The protein operates within amino-acid biosynthesis; L-valine biosynthesis; L-valine from pyruvate: step 2/4. In terms of biological role, involved in the biosynthesis of branched-chain amino acids (BCAA). Catalyzes an alkyl-migration followed by a ketol-acid reduction of (S)-2-acetolactate (S2AL) to yield (R)-2,3-dihydroxy-isovalerate. In the isomerase reaction, S2AL is rearranged via a Mg-dependent methyl migration to produce 3-hydroxy-3-methyl-2-ketobutyrate (HMKB). In the reductase reaction, this 2-ketoacid undergoes a metal-dependent reduction by NADPH to yield (R)-2,3-dihydroxy-isovalerate. This is Ketol-acid reductoisomerase (NADP(+)) from Ruminiclostridium cellulolyticum (strain ATCC 35319 / DSM 5812 / JCM 6584 / H10) (Clostridium cellulolyticum).